A 349-amino-acid polypeptide reads, in one-letter code: Glycosyltransferase 8 domain-containing protein 2 (349 aa).

At 1–6 the chain is on the cytoplasmic side; sequence MAFLRK. The helical; Signal-anchor for type II membrane protein transmembrane segment at 7 to 24 threads the bilayer; the sequence is VNQVLLLLLVLTLCGILY. The Lumenal segment spans residues 25–349; the sequence is KKVHKGAVLK…AGIFKLHHNR (325 aa). The N-linked (GlcNAc...) asparagine glycan is linked to asparagine 234.

This sequence belongs to the glycosyltransferase 8 family.

It is found in the membrane. The polypeptide is Glycosyltransferase 8 domain-containing protein 2 (Glt8d2) (Mus musculus (Mouse)).